Consider the following 478-residue polypeptide: Amino acid oxidase imqH (478 aa).

The signal sequence occupies residues 1–22 (MPAPKSIIIVGSGVFGLSTAHA). FAD is bound by residues Val-14, Phe-15, Asp-38, Asn-53, Ala-57, Asn-58, Arg-63, and Ile-64. Asn-97 and Asn-167 each carry an N-linked (GlcNAc...) asparagine glycan. Residue Val-208 coordinates FAD. Cys-399 carries the S-8alpha-FAD cysteine modification. FAD is bound by residues Phe-432 and Lys-433.

The protein belongs to the MSOX/MTOX family. Dimer. FAD is required as a cofactor.

It participates in secondary metabolite biosynthesis. Its function is as follows. Nonribosomal peptide synthetase; part of the gene cluster that mediates the biosynthesis of imizoquins A to D, tripeptide-derived alkaloids that serve a protective role against oxidative stress that are essential for normal germination. ImqB is a canonical three-module NRPS that assembles the tripeptide backbone of the imizoquins via condensation of Trp, Tyr, and Leu-derived precursors. N-methylation by imqF and phenol oxidation by imqC, followed by cyclization via the FAD-dependent oxidase imqH carry out the three-step transformation of L-tyrosine into tetrahydroisoquinoline. Importantly, this sequence requires the presence of a free amine in the tyrosine moiety, indicating that isoquinoline formation occurs prior to peptide bond formation. The imidazolidin-4-one ring of imizoquins could form following additional oxidation of the methyl-derived bridgehead carbon by imqH. Lastly, O-methylation by imqG and leucine hydroxylation by imqE complete biosynthesis of the imizoquins. This is Amino acid oxidase imqH from Aspergillus flavus (strain ATCC 200026 / FGSC A1120 / IAM 13836 / NRRL 3357 / JCM 12722 / SRRC 167).